We begin with the raw amino-acid sequence, 1444 residues long: Rho GTPase-activating protein 31 (1444 aa).

The 196-residue stretch at 21 to 216 (CDLTEYLESS…FILNHVDQIF (196 aa)) folds into the Rho-GAP domain. A Phosphoserine modification is found at Ser272. Thr286 is subject to Phosphothreonine. Ser346, Ser349, and Ser387 each carry phosphoserine. Positions 398-427 (WGQEGMPPGAEGGFDVSSDRSHLQGAQARP) are disordered. Ser476 carries the post-translational modification Phosphoserine. The interval 504–631 (TNSTPCRTPP…ESSTLQESPR (128 aa)) is disordered. Over residues 515–534 (ELQSLSSLEEFSFHGSESGG) the composition is skewed to low complexity. Basic and acidic residues predominate over residues 600-619 (NELEKRPNPEKVVEEGREAG). Position 679 is a phosphothreonine (Thr679). 2 disordered regions span residues 688–893 (SSLG…EDDT) and 906–1108 (EPWE…SSLN). Ser701 and Ser712 each carry phosphoserine. Residues 722-734 (PANQSTQGASTAA) are compositionally biased toward polar residues. Over residues 735-745 (SREKPEPEQGL) the composition is skewed to basic and acidic residues. Residues 777 to 790 (LSPPLPPAPPPPTP) show a composition bias toward pro residues. Ser778 bears the Phosphoserine mark. A Phosphothreonine modification is found at Thr789. Residues 803–817 (GPEREDSSRKLRTDL) are compositionally biased toward basic and acidic residues. Residues 822–834 (LKSQDSPEISSLC) are compositionally biased toward polar residues. Residues 839–848 (ATPRHSDKQN) show a composition bias toward basic and acidic residues. A compositionally biased stretch (polar residues) spans 960-977 (TVKSQWTLEVPSSSSCAN). Ser974 carries the post-translational modification Phosphoserine. Basic and acidic residues predominate over residues 992–1008 (PRREITGWDEKALRSFR). Polar residues predominate over residues 1028-1038 (VQPNPAETSPI). The segment covering 1064–1075 (GPESSKESSPSV) has biased composition (low complexity). Ser1105, Ser1106, and Ser1178 each carry phosphoserine. Polar residues-rich tracts occupy residues 1211 to 1224 (QIPQPLPSQSSGEN) and 1234 to 1245 (EGPSSTSGTTQK). The segment at 1211–1346 (QIPQPLPSQS…HRSRPGRPQS (136 aa)) is disordered. Residues 1246-1265 (PAKDDSPSSLESSKEEKPKQ) are compositionally biased toward basic and acidic residues. 2 stretches are compositionally biased toward polar residues: residues 1292-1303 (PGSSNLLSTQDA) and 1314-1323 (TEPSGDNLLS).

Interacts with ITSN1, which inhibits GAP activity. Interacts with PARVA. Interacts with GTP-loaded RHOU. Post-translationally, phosphorylation on Thr-789 reduces GAP activity.

Its subcellular location is the cell projection. The protein localises to the lamellipodium. It localises to the cell junction. It is found in the focal adhesion. Functions as a GTPase-activating protein (GAP) for RAC1 and CDC42. Required for cell spreading, polarized lamellipodia formation and cell migration. In Homo sapiens (Human), this protein is Rho GTPase-activating protein 31 (ARHGAP31).